The primary structure comprises 234 residues: (5-formylfuran-3-yl)methyl phosphate synthase (234 aa).

Catalysis depends on lysine 27, which acts as the Schiff-base intermediate with substrate. Catalysis depends on lysine 85, which acts as the Proton acceptor.

It belongs to the MfnB family.

The catalysed reaction is 2 D-glyceraldehyde 3-phosphate = 4-(hydroxymethyl)-2-furancarboxaldehyde phosphate + phosphate + 2 H2O. The protein operates within cofactor biosynthesis; methanofuran biosynthesis. Catalyzes the formation of 4-(hydroxymethyl)-2-furancarboxaldehyde phosphate (4-HFC-P) from two molecules of glyceraldehyde-3-P (GA-3-P). The sequence is that of (5-formylfuran-3-yl)methyl phosphate synthase from Methanosarcina acetivorans (strain ATCC 35395 / DSM 2834 / JCM 12185 / C2A).